A 7760-amino-acid chain; its full sequence is MNNIDHQNCERTVAADASEYRQGIAKVNSDFDLKAEKSRLFENPELASPVYHPGSAAMSVDESGTPRSASPLSSYTGSPGETRHLGTELSRTLSGDTLSDPKEASSSVQDDVNEKGEDCLFGPSLFDAADAKAGPQSSVGDRFKAQAEYWRTALAGAPALLDLPTDRPRPSHPSFEGDRVPFELNSKTTRALKELSQQQGVTLFLTILSAWSAVLSRLSGQDDIVIGTPSSSRTSEVDSLNGSATKMLALRVDLSGKPNTQELLDRVRRTTLSAFTHQDLSFEQVVEILQPPRKMDHTPLFQVLYSWRNHENSSDLATDAAKFDLTLDMWESDNSIRGSLGYSTALFDRSSIERHVGYLQAMLLEMTTDSELPVALAEILSLDERTFLLETLNVTAENHSDSQHLHQLFEQQAERRPHAIAVVHESESLTYSELNTRANRLAHHLIHVGVQPDSVVAICVERSLALIVGILAILKSGGAYVPLDPVHASERLVGILSDAAPSVLVADACGMKALQGADLSQLKMVDPTSTLPTSAANPRVPNLEMHHLAYVIYTSGTTGKPKGVMVEHRQIARLFATSATQFDFSEQDTWCLLHSAAFDFSIWEMWGALRQGGKLVVVSQDVVRTPHDLHQLLQEHAVTVLNMTPTAFKPLLEIDTANKLQAALRYLFLGGEALSPAMLKPWLLPQAERCPKIINLYGPTEISIYVTYSKVTLEDCSQATSSIGGRLPDMRAYVFDDFMRPMPRGVVGELYVGGPGVARGYLNRPELTAERFLRNPFAAGRDERVYRTGDLVKQLPNGSLLYMGRNDHQVKIRGFRIELGEIETRLVEYPLVSEAVVIATGDDSNRRLVAYVTVRSDEQAPVAESSSTDQLASSLRAHLATQLPEYMVPSAFVRMDAFPMTPNGKLDVQALPAPRESDFARQAYVPPQGELETAIASIWSELLQMQRVSRDDSFFALGGHSLLAVQVISKLHALGHSVSASVLFESPTLSAFAHAIGQHRAIVVPPNLITSDVARITPEMLPLIDLTQTDIDHIVEQVPGGLANIQDIYALAPLQEGILFHHLMHKTGDPYLLYYGRAFDNRALLDQYLVGMQQMVSRHDILRTAFFWEDLSTPAQVVLRSATLSTTELTLDPADGSAIEQLKQRLDPRYNRLDLTQAPLLHYTIAQDFDGRWILGEWLHHLLGDHSTLEHIELEIRAIQEGRGAELLAPHPYRNLIAQTRLGVSQDAHEQFFKAMLSDFDTPSLPFGITDVRGDGSNITESTRMLPADLNERLRFQAKRLGVSLASLCHVAWAQVIARTSGQQRVVFGTVLFGRMQAETSSEGAIGLYINTLPFRVDVDSRSVEESVQETHALLAKLLEHEHAPLALAQRCSDVEPGVPLFSSLLNYRHNMESPEHGSGMEFLGEVERTNYPYDLSIEDYGHSLGLTAQVVLPLVSDRACGYMQEALDSLASALEYNPKMPVSQLDVLPADERKLLTRGGRWTQEDDSYHVCLHELFEQYADRVPNALSVMTDKHSLTYAEMNAESNRLAHRLIDLGAKTDSVMGLCMERSSSMIVAMFGILKSGAAYLPLDPSYTGERLKDIVSDAAPTILVTDAVGRKALGELVTATMVVLDMSDLKGGDTSNPQVPGLHSGNLAYMIYTSGSTGKPKGVMVEHKGVASLAQYHSELIGIHEGSRMLQFASISFDFSVWEIFLTLCSGATLVLAPSSIRMDRNMLWNYMMRQSVTHATFTPSFLQDGVDFPCAIEPLTLTLGGEALGPTLLQNLIQQGIAVFNDYGPTESSISAATWKGSADFNGDVVPIGRPVRNSRLYVLDSQQEPVPLGAVGELYISGVGLARGYLNRPEQTAERFLQNPFGDNKSARMYRTGDLVRYLPDGDLVYLGRTDYQVKIRGFRIELGEIEVRLAEHAMVSEAFVLALGEGINKRLVAYLTTDPEVQIEALDTTSLPSLLRSHLSARLPEYMVPAAFVCLDAFPLTSNGKLDRKALPAPSEDDYARQAYEAPEGEVENAIASIWSELLHVKRVSRHDSFFALGGHSLLAVQVISRLHRLGHSVSVRTLFESPTLLALAQSIGEHRAIVVPPNVITPGVTHITPEMLPLIDLNQNDIDRIVDQIPGGVANIQDIYALSPLQDGILFHNLMHKVGDPYLLYTARAFDNREVLDQYLAATQQIMDRHDILRTAFMWENLSVPAQVVLRNASLPVTELTLDPADGPIVQQLKRRLDPRHNRIDLTQAPLLRFTIAQDSDGRWILGELLHHLTGDHSTLEVIEAELLAIQEGRGAELLAAHPYRNLIAQARLGVSQAAHEKFFKEMLSDFDTPSLPFGIKEVRGDGSNVTESGLTLPSKLNERLRFQAKRLGVSVASLCHVAWAQVIARTSGQQQVVFGTVLFGRMQAETSSDRAIGLYINTLPLRVDVDDRSVEECVQLTHSLLAKLLEHEHASLALAQRCSSVQPGVPLFNSLLNYRHNMDTAQHASSASGMELLESLERTNYPFTISVEDYGTSLGLTAQVAQPLESGRACGYMQEALDSLTTALETSAGMSVSRLNILPTEERQLLTQGGSTQKHDDSYRICLHELFEQHVDRAPDALSIICGDQSLTYADLNAYSNRLAHRLIDTGVKADSIVALCMERSPSMIVAMLAILKAGAAYLPLDPLYPSDRLQGIVTDAEPAVLVADAVGRKALGELSSVHHIEVDIDGLQDGNASNPQVSNVDFTKLAYVIYTSGSTGKPKGVMLEHQGVSSLVQYHRELLRVCEGSRMLQFASISFDFSVWEIFIILCSGATLVLAPSSMRMDRDMLWRYMDEVSVSHAACTPSFLQDGADLPPLTSPLTLALGGEALSPALLQNLIRQGINVFNLYGPTETSIATATWNCPTNFCGDIVPIGGPVRNARHYILDSQQLPVPMGAIGELFIGGIGLARGYLNRPEQTAERFLKDPFSEDEGARVYRTGDLVRQLPDGNLVYLGRADFQVKIRGFRIELGEIEARLVEHESVSEAVVVALGEGVEARLVAYFTRDHDGKSEAFDKSLLPSILRSHLSARLPDYMVPSAFVRMEAFPLLASGKLDRRSLPAPSEEDYARQAYEAPQGAVEAAIASVWSELLNVNRVSRHDSFFALGGHSLLAVQVISRLHGLGHSVSVRALFESPTLSALAQSIGEHRAIVVPSNVITLDSIRITPEMLPLIDLTQDDIDHIVEQVPGGVANIQDIYALAPLQDGILFHHLMHKVGDPYILYSATAFDNRASVDQYLAATQQIVDRHDILRTAFMWENLSTPTQVVLRNAPLSITELFLDTSKGPVVQQLQKRSDPRFHRMDLTQAPLLRFTVAQEDDGRWIVSQLLHHLIGDHSTLEVIELEMKAIKEGRAADLLAPHPYRNLIAQARLGVTQDAHEKFFKEMLSDFDTPSLPFGITDVRGDGSNVTESERDLSAELNERLRFQAKRLGVSLASLCHVAWAQVIARTSGQQQVVFGTVLFGRMQAETSSGQAMGLYINTLPLRVDVDNRSVEESVQQTHSRLAKLLEHEHASLTLAQRCSDVPPGAPLFSSLLNYRHNAEMPERGSNISGKEEVDSRERTNYPFSISVEDYGTALGLTAQTVQPLDSDRACGYMQEALDSLASALEHNPKMPVAHLNVLPAEERTLLLDTWNDTAEDYPEHLCLHQLFEQQAERTPDTLAVVCEDKSLTYRELEARSNGLAHHLIQLGVRTDDIVAICVKRSVEMIVGILAVLKAGGAYVPLDPFFASDRLKDIMSDAAPVVLLADEAGRTALGKSAVSDVVVVDPTLFTTKADSPPRVADLSSQNLAYVIYTSGTTGKPKGVMVEHQGVVNLVVSQQPLLNISTSSRFTQFLSISFDPSVWETFATLSFGGVLHVLQEDVRRDFRQLWAYLQLNQITHAIFTPAVIQDCEGLPPLESMSTLLIGGEALSGALVRRVGDLVPNAAIINEYGPTEASIAALSWTYVEGGLIGDDIVPIGHPLSSKRVYILDEFGLPLPLGVAGELYLGGVGVARGYLNRPDLSAEKFVMDPFSREPGARMYKTGDMAKYHTDGRVICLGRNDDQIKIRGFRVELGEIEARLVEYPQVSEAAVVPLGKGGNMRLVAYVIARDEGEVEQHSDRSQSASSTELATSLRTHLLAKLPDYMVPSAFVRLSSFPVTTNGKLDRRALPAPNEDDYAREAYEAPQGEVETALASIWCELLQLKRVSRNDSFFALGGHSLLAVRLVNRVSTLGATVAISTLFASPSLSAFASRVQEQLAQEESSVMAITPVSRDNDLPLSFAQQRLWFLAQLGGVSDTYHMPLALRLQGQVNQVALESSLSELCNRHEALRSVFVTVNGQAHVKILPPGGLSIRKVDLRGAADQEIQLRQWMDKETHASFDLEQGPLVRASLIQTQDDECVLLITQHHIVSDGWSVGIMLRELSQLYTAFCSGESSPLSPLRIQYPDYAAWQRKWLSGDQLKSQSEYWRTALSGAPVLLDLPTDHPRPAHQSFKGDRVTIAWDADITRAVKQLSQRHGVTLFMTILSAWSAVLSHLSGQDDVVIGTPNANRNHPEIESLIGFFVNTLALRIDLSGKPTTQELLERVRRSTLAALNHQDLPFEQVVEAVQPPRKMDHTPLFQVMFAWQNNEDDDLELPGLQVTPCDLDYDAAKFDLTLSLWEEDSGIGGNLEYSTALFDRTTIERHVGYVHAMLLAMTTDDEQPVAAAEILSQDERTLLLETLNVTAESQSDKSCLHQLFEQRVESTPDAIAVVHDEQTLTYGELNARANRLAHHLIQLGVKPDSLVAICVDRSLPMLVGVLAILKAGGAYVPLDPVHASSRLLDILDDVQSSVVLVDARGTKALQGSDLSHMNVVDLREPLSGPTHNPQVMDLSSNHLAYVIYTSGSTGKPKGVMVEHRQVARLFTATSVWFDISEQDTWCLLHSFAFDFSVWEIWGAFLYGGKLVVVSQDIARSPQELYRTICEQAVTVLNMTPSAFKQLIDIHSGEQLDDSLRYVVFGGEALAPAILKPWFHTHAQDRPKVVNMYGITETTVHVTYRLMTPEDCSQTTSPIGVRIPDLRTYVLNDCGRPVPLGVMGELFVGGAGVTRGYLNRPDLTADRFIPDPFVEGHEGRMYKTGDLVKQLPDGSLVYMGRNDHQVKIRGFRIELGEIEARLTDHARVIEAVVIPLGDERNKRLVAYVSIREGEMSEEDGDDAESSFAERLASTLRTHLSTRLPEYMIPSAFVHMASFPLTPSGKLDMRALPAPSEDNVARQAYEAPEGEVETAIASIWSELLQIERVSRHDSFFALGGHSLLAVQVISKLHRVGHSVSVRALFEAPTLAVFAASIGHHQAIVIPPNVITPSTTSITPEMLPLIDLTQTDIDHVVEHVPGGVSNIQDIYSLSPLQDGILFHHLMAKSGDPYLLYVAMRFDTREALDQHLAGMQLIVNRHDILRTAFMWENLSSPAQVVWRNAPITVMEMNLDPSEGPILQQMKERFDPLHYKIDLTQAPVLRFAVAQDIDNQWILVRLLHHLVEDNSTLKVLHSELQMFAENSNAVLPPAEPYRNLIAQARLGMSQQAHEKFFKAMLEDIDTPSLPFGMANVHGEGADVIVSDRMLPQSLNDRLRLQAKRLGVTVASLCHVAWAQVIARTSGQQRVVFGTVLFGRMQAETSADQAMGLYINTLPIRVDIDGRSVEDSVQQTHSLLAKLLEHEHAPLTLAQRCSGIPAGGPLFSSLLNYRHSEDDDEEESGEEDMELLDFQERINYPFGISVEDLGTSLGLTAQVAAPLDSYRVCGYMQEAMESLANALESNPKMAVAQLDVLPAEERTLLLETWNNSAEEYPDSLCLHHMFEQQSERTPEAVAVVYGDRSLTYGELNARANGLARHLVHYGIQPDERVAICVKRSPEMLVGIMAILKVGGAYVPLDPLFASDRLKDIINDAAPRILLADEAGRAALGKSIVSGLTAVDPTLFGADLGASPRVAGLSCRNLAYVIYTSGTTGKPKGVLVEHQGVVNLLTSRQKHQLVQPSSNLTQFFSYSFDASILEIFGSLSFGGTLHILQEDVRLDFHQLWTYMEKHEITHAALTPAVLQNCEGLSPLVSMSTLIIGGESLSEGMVRKVSELMPNAAVVNEYGPTEATVATLSWKYSNEGMIGHDLVPVGRPLSNKRVYLLDDQSRPVPLGAVGELYIGGAGIARGYLNRPDLTAEKFLVDPFASESGATMYRTGDLAKYHPDGNVICLGRNDDQVKIRGFRVELGEIEARLSEHPQVSEAVVVPLGEGSLLRLVAYIIARTEDVLEQNIDTAEPMQLSSSLRSHLATRLPDYMVPSAFVCLSALPLTSNGKLDRRALPAPSDDDYAREAYEAPQGEVETALALIWCELLQLKRVSRNDSFFALGGHSLLAVQVISRLHRLGHSVSVRALFDSPTLSALAQSIGQHHAIVVPPNYITPGVTRITPEMLPLIDLSQMDIDHIAERVPGGVANIQDIYALSPLQDGILFHHLMQKSGDPYLFFTARSFDTRLSLDMHLSAMQQIVDRHDILRTSFVWEGLSAPAQVVWRTAPLSITELDLDPAQGSAVQQLQERFDPRNNRIDLSQAPLLRLAVAQELDGRWILMELLHHTIGDHSTLETTEIELREIQEGRGADLLVPHPYRNLIAQARLGVSQEAHEKFFKEMLEDFDTPSLPFGIADIFGDGSQVTECHRMLPQSLNDRLRAQAKRLGVSVASMCHVAWAQVIAQTSGQQRVVFGTVLFGRMQAETSSDQAMGLYINTLPFRVDVNNATVEEGVHQAQSLLAKLLEHEHASLTLAQSCSGIPAGSPLFSSLLNYRHNSAELLEEASNNSEMDILNSQERTNYPLGLSVEDFGTSLGLTAQAVLPLDPSRICGYMQEALDNLASALEFNPTMTVAQLDTVPAEEHNLLLQAFNDTAEEHPSSLCLHRMFEHQVERTPAAIAVVHEDQSLTYSELNVRANRLAHHLIQLGVQVETLVAICVKRSPEMLIAILAVLKAGGAYVPLDPLYASDRLREMVSDAAPSVLIADDAGRKALGGPFVATLTVVDPSTAFAGDCSDPHVGGLTSNSLAYVIYTSGTSGTPKGVMVEHQGVVSLVSSRQKQLLVEPTSRMTLFFSVSFDPSLLEIFGTLGFGGALHILGDHIRQDRHLLWKYLEHHRITHAILTPAMLQEFDDSSSLTDMQTLLIGGEALSVRLARKARKIVSNGAVINEYGPTEASIAALSWRYAEHVLHEHTPIGRPFSNRRVYLLDAEGTPVPLGAIGEIYLGGLGVARGYLNRPDLTAERFVADPFSGVSGARMYKTGDLGKFLPDGNVVCLGRNDHQIKIRGYRIELGEIETKLAEHEMVSEVVVVTSGSDADRQLVAYVVANHEHQMTREVDAADSSSLAQLAATLRSYLSARLPDYMVPAAFVRLDALPLTPNGKLDRHALPAPLSHAFATEDYEEPRGAIENILAGIWAELLNIDRVGRNDGFFVLGGYSLLAVRMISRVRAMLGLDLSLRTLFEAPTIAELAPRLLATGVTQDESYDVLLPIKPQGSRPPLFCVHPVTGLSWCFTGLSAHLDSDQPLYGLQARGLIDNGNMASSLDEMVVDYIDQIRRVQPHGPYYLLGYSFGGLVAHTMAAYLEKQGEQVALVALMDTPADYRTMAPEDKDEKQREQSLIQAFSKNRDLYSPEMINPVLRKALQTVNINNNKLGRLQAPRVTGGDLLIFRATVMEDEGRALLDPNAWKPYVQGSIEVCDVDCAHDFMDTPEATVVVSQVLNQKLRQSHCCLQREE.

Disordered stretches follow at residues 42-115 (ENPE…VNEK) and 161-180 (LDLPTDRPRPSHPSFEGDRV). A compositionally biased stretch (polar residues) spans 65-79 (TPRSASPLSSYTGSP). The interval 87–389 (TELSRTLSGD…LSLDERTFLL (303 aa)) is condensation 1. Residues 164–180 (PTDRPRPSHPSFEGDRV) show a composition bias toward basic and acidic residues. The adenylation 1 stretch occupies residues 409-813 (FEQQAERRPH…GRNDHQVKIR (405 aa)). In terms of domain architecture, Carrier 1 spans 926 to 1000 (PPQGELETAI…AFAHAIGQHR (75 aa)). Residue serine 961 is modified to O-(pantetheine 4'-phosphoryl)serine. The tract at residues 1046–1477 (QDIYALAPLQ…VLPADERKLL (432 aa)) is dual epimerase/condensation (E/C) domain 1. The segment at 1498–1893 (FEQYADRVPN…GRTDYQVKIR (396 aa)) is adenylation 2. One can recognise a Carrier 2 domain in the interval 2003–2077 (APEGEVENAI…ALAQSIGEHR (75 aa)). The residue at position 2038 (serine 2038) is an O-(pantetheine 4'-phosphoryl)serine. The dual epimerase/condensation (E/C) domain 2 stretch occupies residues 2099–2558 (PLIDLNQNDI…LPTEERQLLT (460 aa)). The interval 2578-2973 (FEQHVDRAPD…GRADFQVKIR (396 aa)) is adenylation 3. Residues 3083 to 3157 (APQGAVEAAI…ALAQSIGEHR (75 aa)) form the Carrier 3 domain. Serine 3118 is subject to O-(pantetheine 4'-phosphoryl)serine. The interval 3203 to 3634 (QDIYALAPLQ…HLNVLPAEER (432 aa)) is dual epimerase/condensation (E/C) domain 3. An adenylation 4 region spans residues 3658 to 4057 (FEQQAERTPD…GRNDDQIKIR (400 aa)). Positions 4174–4248 (APQGEVETAL…AFASRVQEQL (75 aa)) constitute a Carrier 4 domain. Position 4209 is an O-(pantetheine 4'-phosphoryl)serine (serine 4209). The tract at residues 4267–4705 (LPLSFAQQRL…AAEILSQDER (439 aa)) is condensation 2. The adenylation 5 stretch occupies residues 4729–5133 (FEQRVESTPD…GRNDHQVKIR (405 aa)). Residues 5250 to 5324 (APEGEVETAI…VFAASIGHHQ (75 aa)) form the Carrier 5 domain. At serine 5285 the chain carries O-(pantetheine 4'-phosphoryl)serine. Positions 5370-5804 (QDIYSLSPLQ…VLPAEERTLL (435 aa)) are dual dehydration/condensation (C*) domain. The adenylation 6 stretch occupies residues 5825–6224 (FEQQSERTPE…GRNDDQVKIR (400 aa)). Residues 6338–6412 (APQGEVETAL…ALAQSIGQHH (75 aa)) enclose the Carrier 6 domain. Serine 6373 carries the post-translational modification O-(pantetheine 4'-phosphoryl)serine. The interval 6458-6890 (QDIYALSPLQ…QLDTVPAEEH (433 aa)) is dual epimerase/condensation (E/C) domain 4. Residues 6914–7300 (FEHQVERTPA…KFLPDGNVVC (387 aa)) are adenylation 7. The region spanning 7428–7503 (EPRGAIENIL…ELAPRLLATG (76 aa)) is the Carrier 7 domain. O-(pantetheine 4'-phosphoryl)serine is present on serine 7463. A thioesterase (TE) domain region spans residues 7561-7722 (DNGNMASSLD…KPYVQGSIEV (162 aa)).

Belongs to the NRP synthetase family.

In terms of biological role, heptamodular nonribosomal peptide synthetase that catalyzes the biosynthesis of malpinins, natural products that show biosurfactant activities. Malpinins are acetylated hexapeptides (Ac-D-Leu/Val-D-Arg-D-Leu/Val-L-Phe/Leu-Dhb-D-Trp) containing a non-canonical amino acid derived from dehydration of L-Trp, (Z)-dehydrobutyrine (Dhb), at position 5, as well as a C-terminal D-amino acid, D-tryptophan, that can be oxidized to kynurenine. Incorporated D-amino acids in positions 1, 3 and 4 are variable resulting in the malpinin A-congeners malpinin B to E. Both modules M1 and M3 have relaxed specificity towards aliphatic amino acids (L-Leu &gt; L-Met &gt; L/D-Val &gt; L-Cys), explaining Val at position 1 and 3 in malpinin A-congeners malpinin B to D. The incorporation of L-Leu, but not N-acetyl-L-Leu by module 1 suggests the N-terminal acetylation occurs at a later stage of biosynthesis. Similar to M1 and M3, M4 has a broad substrate spectrum showing the highest activity with L-Phe followed by other hydrophobic amino acids (L-Phe &gt; L-Met = L-Trp). In contrast, M2, M5 and M6 are highly specific for L-Arg, L-Thr, and L-Trp, respectively. Solely, M7 converted its preferred substrate (L-Phe) with a 15 000-fold reduced turnover rate compared to the most active module M6, indicating that its A domain cannot contribute to the malpinin biosynthesis due to low activity. Since the last T domain in malA is apparently not loaded with an amino acid, either the TE domain must offload the oligopeptide from the preceding T domain or the dual E/C domain of M7 must transfer the final peptide chain to the free acceptor T domain of M7 prior to release. This is Malpinin synthetase from Mortierella alpina (Oleaginous fungus).